The chain runs to 439 residues: Cysteine--tRNA ligase (439 aa).

C28 contacts Zn(2+). Residues 30 to 40 carry the 'HIGH' region motif; the sequence is ITVYDLCHIGH. C209, H234, and E238 together coordinate Zn(2+). The 'KMSKS' region motif lies at 266–270; sequence KMSKS. K269 provides a ligand contact to ATP.

Belongs to the class-I aminoacyl-tRNA synthetase family. As to quaternary structure, monomer. It depends on Zn(2+) as a cofactor.

The protein localises to the cytoplasm. The enzyme catalyses tRNA(Cys) + L-cysteine + ATP = L-cysteinyl-tRNA(Cys) + AMP + diphosphate. This is Cysteine--tRNA ligase from Shigella boydii serotype 4 (strain Sb227).